The sequence spans 312 residues: Acetaldehyde dehydrogenase (312 aa).

11-14 contributes to the NAD(+) binding site; that stretch reads SGNI. Cysteine 129 serves as the catalytic Acyl-thioester intermediate. Residues 160-168 and asparagine 287 each bind NAD(+); that span reads SAGPGTRAN.

This sequence belongs to the acetaldehyde dehydrogenase family.

It carries out the reaction acetaldehyde + NAD(+) + CoA = acetyl-CoA + NADH + H(+). The protein is Acetaldehyde dehydrogenase (xylQ) of Sphingobium yanoikuyae (Sphingomonas yanoikuyae).